The sequence spans 411 residues: Efflux pump periplasmic linker BepF (411 aa).

A coiled-coil region spans residues 118–196 (FVLQKDALQA…SLEQAQINLG (79 aa)).

Belongs to the membrane fusion protein (MFP) (TC 8.A.1) family. As to quaternary structure, probably part of a tripartite efflux pump, which is composed of an outer membrane efflux protein, an inner membrane protein and a protein that expands the periplasmic space. Could form a tripartite pump with BepC and BepG.

The protein resides in the periplasm. Its function is as follows. May contribute to resistance to some drugs, such as deoxycholate, sodium dodecyl sulfate and nalidixic acid, in the absence of BepD and BepE. This Brucella suis biovar 1 (strain 1330) protein is Efflux pump periplasmic linker BepF (bepF).